Consider the following 50-residue polypeptide: PhoP/PhoQ regulator MgrB (50 aa).

Topologically, residues 1 to 4 are cytoplasmic; sequence MLDL. A helical transmembrane segment spans residues 5-27; it reads NITKLVTTVVIIAACCLFYLLAL. Topologically, residues 28–50 are periplasmic; that stretch reads DSYCDQGGTFSTGICAITTIVPW.

It belongs to the MgrB family. Probably interacts with the periplasmic domain of PhoQ.

The protein resides in the cell inner membrane. PhoP-regulated transcription is redox-sensitive, being activated when the periplasm becomes more reducing. MgrB acts between DsbA/DsbB and PhoP/PhoQ in this pathway. Represses PhoP/PhoQ signaling, possibly by binding to the periplasmic domain of PhoQ, altering its activity and that of downstream effector PhoP. The chain is PhoP/PhoQ regulator MgrB from Yersinia pestis.